Here is a 173-residue protein sequence, read N- to C-terminus: CASP-like protein 3A1 (173 aa).

A topological domain (cytoplasmic) is located at residue M1. The helical transmembrane segment at 2–22 (VDIALRSAVVAFMVVSLSAMF) threads the bilayer. Residues 23-48 (TSTQHSEVHIIGFSIPVSLRWNRSQP) lie on the Extracellular side of the membrane. The N-linked (GlcNAc...) asparagine glycan is linked to N44. Residues 49–69 (FEFLVVVELLICAYAFVQFVY) traverse the membrane as a helical segment. Residues 70–84 (QSVVLAKNAVPTRRC) lie on the Cytoplasmic side of the membrane. A helical transmembrane segment spans residues 85 to 105 (IWVQLAADQVCAYLVLAAAAA). Residues 106–140 (AAGASRTNKSGFQSLGMQNIKVPGVCIVLDKFCNR) lie on the Extracellular side of the membrane. N113 carries N-linked (GlcNAc...) asparagine glycosylation. The helical transmembrane segment at 141-161 (ATIAIIFTLLAAGASGISVTL) threads the bilayer. Topologically, residues 162–173 (DVYMLTLTYYMG) are cytoplasmic.

The protein belongs to the Casparian strip membrane proteins (CASP) family. In terms of assembly, homodimer and heterodimers.

The protein resides in the cell membrane. The sequence is that of CASP-like protein 3A1 from Pteridium aquilinum subsp. aquilinum (Bracken fern).